Consider the following 287-residue polypeptide: MKNVLSIQSHVIYGHAGNSAAVFPMQRLGVNVWPLNTVQLSNHMQYGHWAGSAIDAAKMEQLVDGIAAIGALKRCDAVLSGFLGSPAQARAAVEIVRTVKATNPNAWYFCDPAMGQTGGIRPEPGVEEFIVAELPELADGMAPNHSELQKLAGQRIETVAEAVAACRSIIRRSPQVILVKHLHDRNSPADRFNMLVVTETEAWIGQRPLYAFPRHPVGVGDLTSAIFVARRLRGDSVRAAFEHTLAAVHAVVKATYDARRYELELVAAQDEIARPSEWFGAWVTGAD.

Substrate-binding positions include serine 9 and methionine 44 to glutamine 45. Residues aspartate 111, alanine 142, glutamate 147, and lysine 180 each contribute to the ATP site. Aspartate 221 lines the substrate pocket.

It belongs to the pyridoxine kinase family. PdxY subfamily. As to quaternary structure, homodimer. Mg(2+) is required as a cofactor.

It carries out the reaction pyridoxal + ATP = pyridoxal 5'-phosphate + ADP + H(+). Its pathway is cofactor metabolism; pyridoxal 5'-phosphate salvage; pyridoxal 5'-phosphate from pyridoxal: step 1/1. In terms of biological role, pyridoxal kinase involved in the salvage pathway of pyridoxal 5'-phosphate (PLP). Catalyzes the phosphorylation of pyridoxal to PLP. The protein is Pyridoxal kinase PdxY of Burkholderia mallei (strain ATCC 23344).